Consider the following 431-residue polypeptide: Glycolipid 2-alpha-mannosyltransferase 1 (431 aa).

At 1–9 the chain is on the cytoplasmic side; sequence MASTRSNAR. A helical; Signal-anchor for type II membrane protein membrane pass occupies residues 10–28; sequence LIRFGIFALVLIGCGYILT. The Lumenal portion of the chain corresponds to 29 to 431; it reads RGSSFQPPNY…RQKGWEKYTA (403 aa). A compositionally biased stretch (polar residues) spans 35-44; sequence PPNYQQTQSP. Residues 35–73 form a disordered region; that stretch reads PPNYQQTQSPAAHEKQTGNVAAGGGAGSGSAGAQVPLGK. Gly residues predominate over residues 55–64; it reads AAGGGAGSGS. The Nucleophile role is filled by Glu-318.

Belongs to the glycosyltransferase 15 family.

The protein localises to the golgi apparatus membrane. It participates in protein modification; protein glycosylation. Functionally, involved in O-glycosylation of cell wall and secreted proteins. Transfers an alpha-D-mannosyl residue from GDP-mannose into lipid-linked oligosaccharide, forming an alpha-(1-&gt;2)-D-mannosyl-D-mannose linkage. Mainly responsible for the addition of the second mannose residue in an O-linked mannose pentamer. Can also substitute for MNT2 by adding the third mannose residue. Important for adherence to host surfaces and for virulence. The polypeptide is Glycolipid 2-alpha-mannosyltransferase 1 (MNT1) (Candida albicans (strain SC5314 / ATCC MYA-2876) (Yeast)).